The following is an 801-amino-acid chain: Mitochondrial intermediate peptidase (801 aa).

Residues 1 to 41 (MKPQLLTPLRRRPWTCRQCLQRLQRLQQQTRRSFETAASPA) constitute a mitochondrion transit peptide. A disordered region spans residues 31-54 (RRSFETAASPAPGHTQVDYIPADA). His565 contacts Zn(2+). Glu566 is a catalytic residue. Residues His569 and His572 each contribute to the Zn(2+) site.

Belongs to the peptidase M3 family. Zn(2+) is required as a cofactor.

It localises to the mitochondrion matrix. It carries out the reaction Release of an N-terminal octapeptide as second stage of processing of some proteins imported into the mitochondrion.. In terms of biological role, cleaves proteins, imported into the mitochondrion, to their mature size. While most mitochondrial precursor proteins are processed to the mature form in one step by mitochondrial processing peptidase (MPP), the sequential cleavage by MIP of an octapeptide after initial processing by MPP is a required step for a subgroup of nuclear-encoded precursor proteins destined for the matrix or the inner membrane. The sequence is that of Mitochondrial intermediate peptidase (oct1) from Aspergillus clavatus (strain ATCC 1007 / CBS 513.65 / DSM 816 / NCTC 3887 / NRRL 1 / QM 1276 / 107).